A 499-amino-acid chain; its full sequence is Probable cytosol aminopeptidase (499 aa).

Residues K269 and D274 each coordinate Mn(2+). Residue K281 is part of the active site. Mn(2+)-binding residues include D292, D351, and E353. R355 is a catalytic residue.

This sequence belongs to the peptidase M17 family. Requires Mn(2+) as cofactor.

The protein resides in the cytoplasm. It carries out the reaction Release of an N-terminal amino acid, Xaa-|-Yaa-, in which Xaa is preferably Leu, but may be other amino acids including Pro although not Arg or Lys, and Yaa may be Pro. Amino acid amides and methyl esters are also readily hydrolyzed, but rates on arylamides are exceedingly low.. The enzyme catalyses Release of an N-terminal amino acid, preferentially leucine, but not glutamic or aspartic acids.. In terms of biological role, presumably involved in the processing and regular turnover of intracellular proteins. Catalyzes the removal of unsubstituted N-terminal amino acids from various peptides. The polypeptide is Probable cytosol aminopeptidase (Actinobacillus pleuropneumoniae serotype 3 (strain JL03)).